Here is a 241-residue protein sequence, read N- to C-terminus: MKSLIFVLLLGAVFAEEDKIVGGYECTRHSQAHQVSLNSGYHFCGGSLVSKDWVVSAAHCYKSVLRVRLGEHHIRVNEGTEQFISSSSVIRHPNYSSYNIDNDIMLIKLTEPATLNQYVHAVALPTECAADATMCTVSGWGNTMSSVDDGDKLQCLNLPILSHADCANSYPGMITQSMFCAGYLEGGKDSCQGDSGGPVVCNGVLQGVVSWGYGCAERDNPGVYAKVCVLSGWVRDTMASY.

Residues Met-1 to Val-13 form the signal peptide. A propeptide spans Phe-14 to Lys-19 (activation peptide). The Peptidase S1 domain maps to Ile-20–Ala-239. Disulfide bonds link Cys-26–Cys-155, Cys-44–Cys-60, Cys-128–Cys-228, Cys-135–Cys-201, Cys-166–Cys-180, and Cys-191–Cys-215. Catalysis depends on charge relay system residues His-59 and Asp-103. Catalysis depends on Ser-195, which acts as the Charge relay system.

Belongs to the peptidase S1 family.

It localises to the secreted. Its subcellular location is the extracellular space. It carries out the reaction Preferential cleavage: Arg-|-Xaa, Lys-|-Xaa.. This chain is Trypsin-10, found in Gadus morhua (Atlantic cod).